The primary structure comprises 265 residues: Tryptophan synthase alpha chain (265 aa).

Active-site proton acceptor residues include E49 and D60.

It belongs to the TrpA family. As to quaternary structure, tetramer of two alpha and two beta chains.

It catalyses the reaction (1S,2R)-1-C-(indol-3-yl)glycerol 3-phosphate + L-serine = D-glyceraldehyde 3-phosphate + L-tryptophan + H2O. It participates in amino-acid biosynthesis; L-tryptophan biosynthesis; L-tryptophan from chorismate: step 5/5. In terms of biological role, the alpha subunit is responsible for the aldol cleavage of indoleglycerol phosphate to indole and glyceraldehyde 3-phosphate. The sequence is that of Tryptophan synthase alpha chain from Polynucleobacter asymbioticus (strain DSM 18221 / CIP 109841 / QLW-P1DMWA-1) (Polynucleobacter necessarius subsp. asymbioticus).